Consider the following 396-residue polypeptide: Ribosomal RNA large subunit methyltransferase I (396 aa).

Residues 2–81 (SVRLVLAKGR…ESIDIAFFSR (80 aa)) enclose the PUA domain.

It belongs to the methyltransferase superfamily. RlmI family.

It localises to the cytoplasm. The catalysed reaction is cytidine(1962) in 23S rRNA + S-adenosyl-L-methionine = 5-methylcytidine(1962) in 23S rRNA + S-adenosyl-L-homocysteine + H(+). Specifically methylates the cytosine at position 1962 (m5C1962) of 23S rRNA. The chain is Ribosomal RNA large subunit methyltransferase I from Escherichia coli (strain K12 / MC4100 / BW2952).